The following is a 227-amino-acid chain: N-acetyltransferase 8B (227 aa).

The Cytoplasmic segment spans residues 1–42 (MAPYHIRKYQESDRKSVVGLLSGGMAEHAPATFRRLLKLPRT). The helical; Signal-anchor for type II membrane protein transmembrane segment at 43-63 (LILLLGGALALLLVSGSWILA) threads the bilayer. In terms of domain architecture, N-acetyltransferase spans 61 to 214 (ILALVFSLSL…ARLVDLHTVH (154 aa)). Over 64 to 227 (LVFSLSLLPA…HLPSAQAGRL (164 aa)) the chain is Lumenal. Lys99 is subject to N6-acetyllysine.

Belongs to the NAT8 family. In terms of processing, acetylation on Lys-99 modulates enzymatic activity.

It localises to the endoplasmic reticulum-Golgi intermediate compartment membrane. Its subcellular location is the endoplasmic reticulum membrane. It catalyses the reaction L-lysyl-[protein] + acetyl-CoA = N(6)-acetyl-L-lysyl-[protein] + CoA + H(+). Allosterically regulated by acetylation at residue Lys-99. Endoplasmic reticulum (ER)-membrane-bound lysine N-acetyltransferase catalyzing the N6-acetylation of lysine residues in the lumen of the ER in various proteins, including PROM1 and BACE1, using acetyl-CoA as acetyl donor. Thereby, may regulate apoptosis through the acetylation and the regulation of the expression of PROM1. Acetylates and stabilizes BACE1 immature protein, leading to increased steady-state levels in neurons. By acting on BACE1 expression, may regulate amyloid beta-peptide formation. N(6)-lysine acetylation in ER maintains protein homeostasis and regulates reticulophagy. This chain is N-acetyltransferase 8B, found in Homo sapiens (Human).